We begin with the raw amino-acid sequence, 179 residues long: Large ribosomal subunit protein uL5 (179 aa).

This sequence belongs to the universal ribosomal protein uL5 family. As to quaternary structure, part of the 50S ribosomal subunit; part of the 5S rRNA/L5/L18/L25 subcomplex. Contacts the 5S rRNA and the P site tRNA. Forms a bridge to the 30S subunit in the 70S ribosome.

In terms of biological role, this is one of the proteins that bind and probably mediate the attachment of the 5S RNA into the large ribosomal subunit, where it forms part of the central protuberance. In the 70S ribosome it contacts protein S13 of the 30S subunit (bridge B1b), connecting the 2 subunits; this bridge is implicated in subunit movement. Contacts the P site tRNA; the 5S rRNA and some of its associated proteins might help stabilize positioning of ribosome-bound tRNAs. The protein is Large ribosomal subunit protein uL5 of Desulfosudis oleivorans (strain DSM 6200 / JCM 39069 / Hxd3) (Desulfococcus oleovorans).